Reading from the N-terminus, the 198-residue chain is MNLVPTVIEQSSRGERAYDIYSRLLKDRIIMLSGPIEDDMANAIIAQLLFLDAQDSTKDISLYINSPGGVVSSGLAIYDTMNFIQSDVQTITLGMAASMASVLASSGTKGKRFALPHAQVMIHQPSGGAQGQQTEIEIAAREILKTRELINKILAENSGQPIERLNQDTERDNYLSAQEAVDYGLIDHIMTNSSEQKK.

Residue Ser98 is the Nucleophile of the active site. The active site involves His123.

This sequence belongs to the peptidase S14 family. In terms of assembly, fourteen ClpP subunits assemble into 2 heptameric rings which stack back to back to give a disk-like structure with a central cavity, resembling the structure of eukaryotic proteasomes.

It is found in the cytoplasm. The catalysed reaction is Hydrolysis of proteins to small peptides in the presence of ATP and magnesium. alpha-casein is the usual test substrate. In the absence of ATP, only oligopeptides shorter than five residues are hydrolyzed (such as succinyl-Leu-Tyr-|-NHMec, and Leu-Tyr-Leu-|-Tyr-Trp, in which cleavage of the -Tyr-|-Leu- and -Tyr-|-Trp bonds also occurs).. Functionally, cleaves peptides in various proteins in a process that requires ATP hydrolysis. Has a chymotrypsin-like activity. Plays a major role in the degradation of misfolded proteins. This Levilactobacillus brevis (strain ATCC 367 / BCRC 12310 / CIP 105137 / JCM 1170 / LMG 11437 / NCIMB 947 / NCTC 947) (Lactobacillus brevis) protein is ATP-dependent Clp protease proteolytic subunit.